Reading from the N-terminus, the 348-residue chain is Acetylesterase (348 aa).

Residues 1–16 form the signal peptide; the sequence is MRSILVIPSFVAVLNA. N-linked (GlcNAc...) asparagine glycans are attached at residues Asn64, Asn165, Asn218, Asn223, and Asn297.

It belongs to the carbohydrate esterase CE16 family. In terms of processing, N-glycosylated.

Its subcellular location is the secreted. It catalyses the reaction an acetyl ester + H2O = an aliphatic alcohol + acetate + H(+). In terms of biological role, acetylesterase that acts as an exo-deacetylase. Shows activity towards naphtyl acetate, triacetin, as well as towards glucose- and xylose acetates. Liberates acetic acid from xylo-oligomers. The chain is Acetylesterase from Hypocrea jecorina (Trichoderma reesei).